The sequence spans 255 residues: 5-oxoprolinase subunit A 1 (255 aa).

It belongs to the LamB/PxpA family. As to quaternary structure, forms a complex composed of PxpA, PxpB and PxpC.

The catalysed reaction is 5-oxo-L-proline + ATP + 2 H2O = L-glutamate + ADP + phosphate + H(+). Functionally, catalyzes the cleavage of 5-oxoproline to form L-glutamate coupled to the hydrolysis of ATP to ADP and inorganic phosphate. The polypeptide is 5-oxoprolinase subunit A 1 (Bradyrhizobium diazoefficiens (strain JCM 10833 / BCRC 13528 / IAM 13628 / NBRC 14792 / USDA 110)).